Here is a 55-residue protein sequence, read N- to C-terminus: UPF0391 membrane protein Neut_2351/Neut_2360 (55 aa).

Transmembrane regions (helical) follow at residues 4 to 24 (LAVVFLIIAVIAALLGVTGVA) and 28 to 48 (AEMAWILFVIGIVLAIVFWVL).

The protein belongs to the UPF0391 family.

It localises to the cell membrane. The sequence is that of UPF0391 membrane protein Neut_2351/Neut_2360 from Nitrosomonas eutropha (strain DSM 101675 / C91 / Nm57).